The sequence spans 22 residues: GAYGQGQNIGQLFVNILIFLFY.

It belongs to the tyrosinase family. Hemocyanin subfamily. Hemolymph.

The protein resides in the secreted. It localises to the extracellular space. Its function is as follows. Hemocyanins are copper-containing oxygen carriers occurring freely dissolved in the hemolymph of many mollusks and arthropods. The polypeptide is Hemocyanin subunit 4 (Homarus americanus (American lobster)).